A 157-amino-acid polypeptide reads, in one-letter code: Arginine repressor (157 aa).

The protein belongs to the ArgR family.

It is found in the cytoplasm. It participates in amino-acid biosynthesis; L-arginine biosynthesis [regulation]. Functionally, regulates arginine biosynthesis genes. In Bacteroides thetaiotaomicron (strain ATCC 29148 / DSM 2079 / JCM 5827 / CCUG 10774 / NCTC 10582 / VPI-5482 / E50), this protein is Arginine repressor.